The sequence spans 295 residues: Bifunctional protein FolD (295 aa).

NADP(+)-binding positions include 166–168 (GRS), serine 191, and isoleucine 232.

This sequence belongs to the tetrahydrofolate dehydrogenase/cyclohydrolase family. As to quaternary structure, homodimer.

The catalysed reaction is (6R)-5,10-methylene-5,6,7,8-tetrahydrofolate + NADP(+) = (6R)-5,10-methenyltetrahydrofolate + NADPH. It catalyses the reaction (6R)-5,10-methenyltetrahydrofolate + H2O = (6R)-10-formyltetrahydrofolate + H(+). Its pathway is one-carbon metabolism; tetrahydrofolate interconversion. Functionally, catalyzes the oxidation of 5,10-methylenetetrahydrofolate to 5,10-methenyltetrahydrofolate and then the hydrolysis of 5,10-methenyltetrahydrofolate to 10-formyltetrahydrofolate. This chain is Bifunctional protein FolD, found in Rhodopseudomonas palustris (strain HaA2).